A 357-amino-acid chain; its full sequence is MRKKIGILTSGGDCPGLNCVIRAVVSHATLTYDWEVFGIPYATQGLLERQAIALNMHGWDLRGIDPLLNMGGTILGTINKGDTLAHVDEMLASYEALALDALIVIGGDGSLGILHELASRGNWNLVAIPKTIDSDVALTERAVGFDTAVNTIVDALNRLTFTAASHDRVMIVEVMGRSAGHLALHAGIAGGADVILIPEISYTISGLCQYIAELRDRWQRKFAIVVVAEGAKLCLEDVQENIASACVSPKCGRGQYIAEQIARCSKNLIDTRVSVLGHIQRGGIPSALDRLTATVFGKTAVDLVAQGKFGQMVAWQNGEAIPVPIQDVVAQSPLHVNPQGSLVQSARCLGIYVGEKT.

ATP-binding positions include glycine 12, 80–81 (KG), and 107–110 (GDGS). Residue aspartate 108 coordinates Mg(2+). Substrate contacts are provided by residues 131 to 133 (TID), arginine 168, 175 to 177 (MGR), glutamate 229, arginine 272, and 278 to 281 (HIQR). Aspartate 133 serves as the catalytic Proton acceptor.

The protein belongs to the phosphofructokinase type A (PFKA) family. Mixed-substrate PFK group III subfamily. Homodimer or homotetramer. Mg(2+) serves as cofactor.

Its subcellular location is the cytoplasm. The enzyme catalyses beta-D-fructose 6-phosphate + ATP = beta-D-fructose 1,6-bisphosphate + ADP + H(+). The protein operates within carbohydrate degradation; glycolysis; D-glyceraldehyde 3-phosphate and glycerone phosphate from D-glucose: step 3/4. Its activity is regulated as follows. Subject to allosteric activation by ADP and other diphosphonucleosides, and inhibition by phosphoenolpyruvate. Its function is as follows. Catalyzes the phosphorylation of D-fructose 6-phosphate to fructose 1,6-bisphosphate by ATP, the first committing step of glycolysis. This Trichormus variabilis (strain ATCC 29413 / PCC 7937) (Anabaena variabilis) protein is ATP-dependent 6-phosphofructokinase.